A 479-amino-acid chain; its full sequence is Probable periplasmic serine endoprotease DegP-like (479 aa).

The first 27 residues, 1 to 27 (MSIPRMKSYFSLIAAVLMLGQVATAQA), serve as a signal peptide directing secretion. Residues 77–99 (LERSMPPGSRPPGAGKGDRQRET) are disordered. Residues His119, Asp149, and Ser222 each act as charge relay system in the active site. Substrate is bound by residues 220–222 (GNS) and 277–281 (LGVVI). PDZ domains lie at 266–357 (LKAS…IRDG) and 363–468 (TVTV…LRQG).

It belongs to the peptidase S1C family.

It localises to the periplasm. It catalyses the reaction Acts on substrates that are at least partially unfolded. The cleavage site P1 residue is normally between a pair of hydrophobic residues, such as Val-|-Val.. Might be efficient in the degradation of transiently denatured and unfolded proteins which accumulate in the periplasm following stress conditions. In Pseudomonas savastanoi pv. phaseolicola (strain 1448A / Race 6) (Pseudomonas syringae pv. phaseolicola (strain 1448A / Race 6)), this protein is Probable periplasmic serine endoprotease DegP-like (mucD).